The sequence spans 421 residues: tRNA(Ile)-lysidine synthase (421 aa).

26 to 31 (SGGADS) contacts ATP.

This sequence belongs to the tRNA(Ile)-lysidine synthase family.

The protein resides in the cytoplasm. The catalysed reaction is cytidine(34) in tRNA(Ile2) + L-lysine + ATP = lysidine(34) in tRNA(Ile2) + AMP + diphosphate + H(+). In terms of biological role, ligates lysine onto the cytidine present at position 34 of the AUA codon-specific tRNA(Ile) that contains the anticodon CAU, in an ATP-dependent manner. Cytidine is converted to lysidine, thus changing the amino acid specificity of the tRNA from methionine to isoleucine. This Streptococcus thermophilus (strain CNRZ 1066) protein is tRNA(Ile)-lysidine synthase.